Here is a 187-residue protein sequence, read N- to C-terminus: Probable DNA-directed RNA polymerase subunit delta (187 aa).

The 68-residue stretch at 14–81 (LSMIEVAHAL…GNNVWALRSW (68 aa)) folds into the HTH HARE-type domain. The tract at residues 96 to 187 (EIEDEEEEKP…EDDSDDTDED (92 aa)) is disordered. Composition is skewed to acidic residues over residues 117-149 (IEDE…EDKD) and 157-187 (ELAE…TDED).

The protein belongs to the RpoE family. As to quaternary structure, RNAP is composed of a core of 2 alpha, a beta and a beta' subunits. The core is associated with a delta subunit and one of several sigma factors.

Participates in both the initiation and recycling phases of transcription. In the presence of the delta subunit, RNAP displays an increased specificity of transcription, a decreased affinity for nucleic acids, and an increased efficiency of RNA synthesis because of enhanced recycling. This Lactococcus lactis subsp. cremoris (strain SK11) protein is Probable DNA-directed RNA polymerase subunit delta.